Consider the following 773-residue polypeptide: Lon protease homolog 2, peroxisomal (773 aa).

The Lon N-terminal domain maps to 9–198; the sequence is LPVILVTSGV…MCIKWMNEKK (190 aa). Residue 336 to 343 coordinates ATP; it reads GPPGIGKT. The region spanning 587 to 766 is the Lon proteolytic domain; that stretch reads PLPAGVCFGL…EDVIGAMMDK (180 aa). Residues serine 672 and lysine 715 contribute to the active site. The Microbody targeting signal motif lies at 771–773; the sequence is AKL.

The protein belongs to the peptidase S16 family.

The protein resides in the peroxisome matrix. It carries out the reaction Hydrolysis of proteins in presence of ATP.. In terms of biological role, ATP-dependent serine protease that mediates the selective degradation of misfolded and unassembled polypeptides in the peroxisomal matrix. Necessary for type 2 peroxisome targeting signal (PTS2)-containing protein processing and facilitates peroxisome matrix protein import. The protein is Lon protease homolog 2, peroxisomal of Caenorhabditis elegans.